We begin with the raw amino-acid sequence, 345 residues long: MDQGQTLARLLDSYATDPRKRAVAAAVGAIAEASIEISELIGQGALAGITGAAHGASNADGDVQKDLDVRAEAAIVAALKNVPYAALASEEAEALLMGDPQAPISIAYDPLDGSSNIDTNMTVGTIFSIIPNEPGVAPFTAPGSCQLAAGFVVYGPQTSFVLTLGDGVDIFTLDRKDHVYRLIREKVKVAGDTAEYAINASNHRHWEQPVRDFVDECLAGADGPRAKNFNMRWIGSLVAEAYRILTRGGVFLYPADSRPGYGDGRLRLLYETHPMAFVMEQAGGAASTGRERVLDLSAAATSTHQRSPLIMGSSDKVNRIVELHLDPSAASRTAPLFGRRGLFRT.

Mg(2+)-binding residues include glutamate 90, aspartate 109, leucine 111, and aspartate 112. Residues 112–115 and asparagine 199 contribute to the substrate site; that span reads DGSS. Mg(2+) is bound at residue glutamate 271.

Belongs to the FBPase class 1 family. Homotetramer. Requires Mg(2+) as cofactor.

Its subcellular location is the cytoplasm. It carries out the reaction beta-D-fructose 1,6-bisphosphate + H2O = beta-D-fructose 6-phosphate + phosphate. It functions in the pathway carbohydrate biosynthesis; Calvin cycle. This chain is Fructose-1,6-bisphosphatase class 1, found in Rhodopseudomonas palustris (strain BisB5).